Here is a 249-residue protein sequence, read N- to C-terminus: MFNDRPQTDRMFFPPERPEVTSELSNNVVLTTLNDLYNWARLSSVWPLMYGTACCFIEFAGLIGSRFDFDRFGLVPRASPRQADLIITAGTITMKFAPALVTLYQQMPEPKYVIAMGACTITGGMFSTDSPTTVRGVDKLIPVDVYIPGCPPRPEAIFDAIIKLRKKMATEDFRERYDTIAQTHRYYTAAHRMKAVADPLTSEYIRLESRQAAPPALAAAIEMGIPLDLQRTPQLEEQIRDGEHRDARA.

C54, C55, C119, and C150 together coordinate [4Fe-4S] cluster.

This sequence belongs to the complex I 20 kDa subunit family. As to quaternary structure, NDH-1 can be composed of about 15 different subunits; different subcomplexes with different compositions have been identified which probably have different functions. Requires [4Fe-4S] cluster as cofactor.

It localises to the cell inner membrane. It catalyses the reaction a plastoquinone + NADH + (n+1) H(+)(in) = a plastoquinol + NAD(+) + n H(+)(out). It carries out the reaction a plastoquinone + NADPH + (n+1) H(+)(in) = a plastoquinol + NADP(+) + n H(+)(out). Functionally, NDH-1 shuttles electrons from an unknown electron donor, via FMN and iron-sulfur (Fe-S) centers, to quinones in the respiratory and/or the photosynthetic chain. The immediate electron acceptor for the enzyme in this species is believed to be plastoquinone. Couples the redox reaction to proton translocation, and thus conserves the redox energy in a proton gradient. Cyanobacterial NDH-1 also plays a role in inorganic carbon-concentration. The polypeptide is NAD(P)H-quinone oxidoreductase subunit K 2 (Gloeobacter violaceus (strain ATCC 29082 / PCC 7421)).